The sequence spans 304 residues: Ribosomal RNA small subunit methyltransferase H (304 aa).

Residues 37 to 39, aspartate 57, phenylalanine 79, aspartate 100, and histidine 107 each bind S-adenosyl-L-methionine; that span reads AGH.

This sequence belongs to the methyltransferase superfamily. RsmH family.

The protein localises to the cytoplasm. It carries out the reaction cytidine(1402) in 16S rRNA + S-adenosyl-L-methionine = N(4)-methylcytidine(1402) in 16S rRNA + S-adenosyl-L-homocysteine + H(+). Specifically methylates the N4 position of cytidine in position 1402 (C1402) of 16S rRNA. The chain is Ribosomal RNA small subunit methyltransferase H from Bacteroides thetaiotaomicron (strain ATCC 29148 / DSM 2079 / JCM 5827 / CCUG 10774 / NCTC 10582 / VPI-5482 / E50).